The following is a 502-amino-acid chain: Protein GIS3 (502 aa).

It localises to the cytoplasm. Its subcellular location is the nucleus. The protein is Protein GIS3 (GIS3) of Saccharomyces cerevisiae (strain ATCC 204508 / S288c) (Baker's yeast).